A 76-amino-acid polypeptide reads, in one-letter code: Defensin-like protein 71 (76 aa).

The N-terminal stretch at 1–22 (MAMTQVFVIFILLATSLCNSNA) is a signal peptide. Cystine bridges form between C36–C74, C40–C63, C49–C72, and C53–C73.

This sequence belongs to the DEFL family.

The protein localises to the secreted. The protein is Defensin-like protein 71 (LCR84) of Arabidopsis thaliana (Mouse-ear cress).